The following is a 157-amino-acid chain: MKKIVLAGGCFWGVEEFLSRINGVVSTEVGYANGRTENPTYEDICTKNTYFAEVCLVNYDENIISLKELLAKFWTIIDPTSLNKQGNDVGSQYRTGIYYVEPSDLEEILNSKEELQKSYSKKIVTEVKPLENYYKAEEYHQKYLKKNPNGYCHIKLD.

Cys-10 is an active-site residue.

Belongs to the MsrA Met sulfoxide reductase family.

It catalyses the reaction L-methionyl-[protein] + [thioredoxin]-disulfide + H2O = L-methionyl-(S)-S-oxide-[protein] + [thioredoxin]-dithiol. The enzyme catalyses [thioredoxin]-disulfide + L-methionine + H2O = L-methionine (S)-S-oxide + [thioredoxin]-dithiol. Has an important function as a repair enzyme for proteins that have been inactivated by oxidation. Catalyzes the reversible oxidation-reduction of methionine sulfoxide in proteins to methionine. The chain is Peptide methionine sulfoxide reductase MsrA from Clostridium perfringens (strain SM101 / Type A).